A 224-amino-acid polypeptide reads, in one-letter code: LexA repressor (224 aa).

The H-T-H motif DNA-binding region spans 31-51 (RAEIANTLGFKSANAAEEHLQ). Residues serine 142 and lysine 179 each act as for autocatalytic cleavage activity in the active site.

It belongs to the peptidase S24 family. As to quaternary structure, homodimer.

The enzyme catalyses Hydrolysis of Ala-|-Gly bond in repressor LexA.. Its function is as follows. Represses a number of genes involved in the response to DNA damage (SOS response), including recA and lexA. In the presence of single-stranded DNA, RecA interacts with LexA causing an autocatalytic cleavage which disrupts the DNA-binding part of LexA, leading to derepression of the SOS regulon and eventually DNA repair. This Delftia acidovorans (strain DSM 14801 / SPH-1) protein is LexA repressor.